Reading from the N-terminus, the 390-residue chain is Magnesium-protoporphyrin IX monomethyl ester [oxidative] cyclase (390 aa).

Belongs to the AcsF family. It depends on Fe cation as a cofactor.

The catalysed reaction is Mg-protoporphyrin IX 13-monomethyl ester + 3 NADPH + 3 O2 + 2 H(+) = 3,8-divinyl protochlorophyllide a + 3 NADP(+) + 5 H2O. It participates in porphyrin-containing compound metabolism; chlorophyll biosynthesis (light-independent). Catalyzes the formation of the isocyclic ring in chlorophyll biosynthesis. Mediates the cyclase reaction, which results in the formation of divinylprotochlorophyllide (Pchlide) characteristic of all chlorophylls from magnesium-protoporphyrin IX 13-monomethyl ester (MgPMME). The sequence is that of Magnesium-protoporphyrin IX monomethyl ester [oxidative] cyclase from Prochlorococcus marinus (strain MIT 9215).